The following is a 145-amino-acid chain: Basic phospholipase A2 S6-45 (145 aa).

An N-terminal signal peptide occupies residues 1 to 19; the sequence is MYPAHLLVLLAVCVSLLGA. Residues 20 to 27 constitute a propeptide that is removed on maturation; the sequence is SDIPPQPL. Intrachain disulfides connect cysteine 38–cysteine 99, cysteine 54–cysteine 144, cysteine 56–cysteine 72, cysteine 71–cysteine 127, cysteine 78–cysteine 120, cysteine 88–cysteine 113, and cysteine 106–cysteine 118. Ca(2+) is bound by residues tyrosine 55, glycine 57, and glycine 59. Residue histidine 75 is part of the active site. Aspartate 76 serves as a coordination point for Ca(2+). Aspartate 121 is an active-site residue.

It belongs to the phospholipase A2 family. Group I subfamily. D49 sub-subfamily. Requires Ca(2+) as cofactor. As to expression, expressed by the venom gland.

It localises to the secreted. It catalyses the reaction a 1,2-diacyl-sn-glycero-3-phosphocholine + H2O = a 1-acyl-sn-glycero-3-phosphocholine + a fatty acid + H(+). Functionally, snake venom phospholipase A2 (PLA2) that inhibits collagen-induced platelet aggregation. PLA2 catalyzes the calcium-dependent hydrolysis of the 2-acyl groups in 3-sn-phosphoglycerides. In Austrelaps superbus (Lowland copperhead snake), this protein is Basic phospholipase A2 S6-45.